Here is a 240-residue protein sequence, read N- to C-terminus: Tetrahydromethanopterin S-methyltransferase subunit A (240 aa).

Residues 1-216 (MADKKAPASG…DAALIAKFNS (216 aa)) lie on the Cytoplasmic side of the membrane. H85 serves as a coordination point for 5-hydroxybenzimidazolylcob(I)amide. A helical transmembrane segment spans residues 217 to 234 (GYYNGKIQGIAIGLFLSL). Over 235–240 (LIFSLL) the chain is Extracellular.

Belongs to the MtrA family. The complex is composed of 8 subunits; MtrA, MtrB, MtrC, MtrD, MtrE, MtrF, MtrG and MtrH. Requires 5-hydroxybenzimidazolylcob(I)amide as cofactor.

The protein localises to the cell membrane. The enzyme catalyses 5-methyl-5,6,7,8-tetrahydromethanopterin + coenzyme M + 2 Na(+)(in) = 5,6,7,8-tetrahydromethanopterin + methyl-coenzyme M + 2 Na(+)(out). Its pathway is one-carbon metabolism; methanogenesis from CO(2); methyl-coenzyme M from 5,10-methylene-5,6,7,8-tetrahydromethanopterin: step 2/2. Functionally, part of a complex that catalyzes the formation of methyl-coenzyme M and tetrahydromethanopterin from coenzyme M and methyl-tetrahydromethanopterin. This is an energy-conserving, sodium-ion translocating step. The chain is Tetrahydromethanopterin S-methyltransferase subunit A from Methanococcus aeolicus (strain ATCC BAA-1280 / DSM 17508 / OCM 812 / Nankai-3).